Reading from the N-terminus, the 209-residue chain is Transcription antitermination protein NusB (209 aa).

This sequence belongs to the NusB family.

Involved in transcription antitermination. Required for transcription of ribosomal RNA (rRNA) genes. Binds specifically to the boxA antiterminator sequence of the ribosomal RNA (rrn) operons. The polypeptide is Transcription antitermination protein NusB (Cyanothece sp. (strain PCC 7425 / ATCC 29141)).